Here is a 308-residue protein sequence, read N- to C-terminus: Ribonuclease Z (308 aa).

Residues H62, H64, D66, H67, H140, D211, and H269 each contribute to the Zn(2+) site. The active-site Proton acceptor is D66.

This sequence belongs to the RNase Z family. Homodimer. It depends on Zn(2+) as a cofactor.

The catalysed reaction is Endonucleolytic cleavage of RNA, removing extra 3' nucleotides from tRNA precursor, generating 3' termini of tRNAs. A 3'-hydroxy group is left at the tRNA terminus and a 5'-phosphoryl group is left at the trailer molecule.. In terms of biological role, zinc phosphodiesterase, which displays some tRNA 3'-processing endonuclease activity. Probably involved in tRNA maturation, by removing a 3'-trailer from precursor tRNA. The polypeptide is Ribonuclease Z (Treponema denticola (strain ATCC 35405 / DSM 14222 / CIP 103919 / JCM 8153 / KCTC 15104)).